A 146-amino-acid polypeptide reads, in one-letter code: Ribosome-binding factor A (146 aa).

Over residues 122 to 134 (QQQFGSAEDVTSN) the composition is skewed to polar residues. The tract at residues 122–146 (QQQFGSAEDVTSNDIDEADDTEGKA) is disordered. Residues 135-146 (DIDEADDTEGKA) are compositionally biased toward acidic residues.

This sequence belongs to the RbfA family. Monomer. Binds 30S ribosomal subunits, but not 50S ribosomal subunits or 70S ribosomes.

The protein resides in the cytoplasm. Functionally, one of several proteins that assist in the late maturation steps of the functional core of the 30S ribosomal subunit. Associates with free 30S ribosomal subunits (but not with 30S subunits that are part of 70S ribosomes or polysomes). Required for efficient processing of 16S rRNA. May interact with the 5'-terminal helix region of 16S rRNA. The chain is Ribosome-binding factor A from Shewanella sp. (strain ANA-3).